The following is an 895-amino-acid chain: MNFRRMLCAAIVLTIVLSIMLPSTVFALEDKSSKLPDYKNDLLYERTFDEGLCFPWHTCEDSGGKCDFAVVDVPGEPGNKAFRLTVIDKGQNKWSVQMRHRGITLEQGHTYTVRFTIWSDKSCRVYAKIGQMGEPYTEYWNNNWNPFNLTPGQKLTVEQNFTMNYPTDDTCEFTFHLGGELAAGTPYYVYLDDVSLYDPRFVKPVEYVLPQPDVRVNQVGYLPFAKKYATVVSSSTSPLKWQLLNSANQVVLEGNTIPKGLDKDSQDYVHWIDFSNFKTEGKGYYFKLPTVNSDTNYSHPFDISADIYSKMKFDALAFFYHKRSGIPIEMPYAGGEQWTRPAGHIGIEPNKGDTNVPTWPQDDEYAGRPQKYYTKDVTGGWYDAGDHGKYVVNGGIAVWTLMNMYERAKIRGIANQGAYKDGGMNIPERNNGYPDILDEARWEIEFFKKMQVTEKEDPSIAGMVHHKIHDFRWTALGMLPHEDPQPRYLRPVSTAATLNFAATLAQSARLWKDYDPTFAADCLEKAEIAWQAALKHPDIYAEYTPGSGGPGGGPYNDDYVGDEFYWAACELYVTTGKDEYKNYLMNSPHYLEMPAKMGENGGANGEDNGLWGCFTWGTTQGLGTITLALVENGLPATDIQKARNNIAKAADRWLENIEEQGYRLPIKQAEDERGGYPWGSNSFILNQMIVMGYAYDFTGNSKYLDGMQDGMSYLLGRNGLDQSYVTGYGERPLQNPHDRFWTPQTSKKFPAPPPGIIAGGPNSRFEDPTITAAVKKDTPPQKCYIDHTDSWSTNEITVNWNAPFAWVTAYLDEIDLITPPGGVDPEEPEVIYGDCNGDGKVNSTDAVALKRYILRSGISINTDNADVNADGRVNSTDLAILKRYILKEIDVLPHK.

A signal peptide spans 1 to 27 (MNFRRMLCAAIVLTIVLSIMLPSTVFA). In terms of domain architecture, CBM-cenC spans 40–199 (NDLLYERTFD…YLDDVSLYDP (160 aa)). The linker stretch occupies residues 199-240 (PRFVKPVEYVLPQPDVRVNQVGYLPFAKKYATVVSSSTSPLK). The catalytic stretch occupies residues 241-815 (WQLLNSANQV…WVTAYLDEID (575 aa)). Aspartate 386 (nucleophile) is an active-site residue. Residues histidine 737, aspartate 786, and glutamate 795 contribute to the active site. Residues 828–894 (PEVIYGDCNG…ILKEIDVLPH (67 aa)) form the Dockerin domain.

The protein belongs to the glycosyl hydrolase 9 (cellulase E) family.

It localises to the secreted. It catalyses the reaction Hydrolysis of (1-&gt;4)-beta-D-glucosidic linkages in cellulose and cellotetraose, releasing cellobiose from the non-reducing ends of the chains.. Its activity is regulated as follows. Inhibited by cellobiose. The sequence is that of Cellulose 1,4-beta-cellobiosidase (celK) from Acetivibrio thermocellus (Hungateiclostridium thermocellum).